A 339-amino-acid polypeptide reads, in one-letter code: Nicotinate-nucleotide--dimethylbenzimidazole phosphoribosyltransferase (339 aa).

Glutamate 306 functions as the Proton acceptor in the catalytic mechanism.

It belongs to the CobT family.

It carries out the reaction 5,6-dimethylbenzimidazole + nicotinate beta-D-ribonucleotide = alpha-ribazole 5'-phosphate + nicotinate + H(+). Its pathway is nucleoside biosynthesis; alpha-ribazole biosynthesis; alpha-ribazole from 5,6-dimethylbenzimidazole: step 1/2. Functionally, catalyzes the synthesis of alpha-ribazole-5'-phosphate from nicotinate mononucleotide (NAMN) and 5,6-dimethylbenzimidazole (DMB). This chain is Nicotinate-nucleotide--dimethylbenzimidazole phosphoribosyltransferase, found in Brucella abortus (strain S19).